We begin with the raw amino-acid sequence, 559 residues long: Glucose-6-phosphate isomerase 2 (559 aa).

The Proton donor role is filled by Glu367. Catalysis depends on residues His398 and Lys522.

This sequence belongs to the GPI family.

The protein localises to the cytoplasm. It catalyses the reaction alpha-D-glucose 6-phosphate = beta-D-fructose 6-phosphate. Its pathway is carbohydrate biosynthesis; gluconeogenesis. It functions in the pathway carbohydrate degradation; glycolysis; D-glyceraldehyde 3-phosphate and glycerone phosphate from D-glucose: step 2/4. Its function is as follows. Catalyzes the reversible isomerization of glucose-6-phosphate to fructose-6-phosphate. The protein is Glucose-6-phosphate isomerase 2 of Chromohalobacter salexigens (strain ATCC BAA-138 / DSM 3043 / CIP 106854 / NCIMB 13768 / 1H11).